Here is a 260-residue protein sequence, read N- to C-terminus: Alpha-acetolactate decarboxylase (260 aa).

This sequence belongs to the alpha-acetolactate decarboxylase family.

The enzyme catalyses (2S)-2-acetolactate + H(+) = (R)-acetoin + CO2. It functions in the pathway polyol metabolism; (R,R)-butane-2,3-diol biosynthesis; (R,R)-butane-2,3-diol from pyruvate: step 2/3. Functionally, converts acetolactate into acetoin, which can be excreted by the cells. This may be a mechanism for controlling the internal pH of cells in the stationary stage. The chain is Alpha-acetolactate decarboxylase (budA) from Klebsiella aerogenes (Enterobacter aerogenes).